A 200-amino-acid polypeptide reads, in one-letter code: Mediator of RNA polymerase II transcription subunit 22 (200 aa).

The stretch at 93–122 forms a coiled coil; sequence SVNEAIDQRNQQLRALQEECDRKLITLRDE. Residues 169-200 form a disordered region; that stretch reads PLLASPETGAGPLQSAAPVHSHGGGPGPTEHT. Positions 190–200 are enriched in gly residues; that stretch reads HGGGPGPTEHT.

The protein belongs to the Mediator complex subunit 22 family. Component of the Mediator complex, which is composed of MED1, MED4, MED6, MED7, MED8, MED9, MED10, MED11, MED12, MED13, MED13L, MED14, MED15, MED16, MED17, MED18, MED19, MED20, MED21, MED22, MED23, MED24, MED25, MED26, MED27, MED29, MED30, MED31, CCNC, CDK8 and CDC2L6/CDK11. The MED12, MED13, CCNC and CDK8 subunits form a distinct module termed the CDK8 module. Mediator containing the CDK8 module is less active than Mediator lacking this module in supporting transcriptional activation. Individual preparations of the Mediator complex lacking one or more distinct subunits have been variously termed ARC, CRSP, DRIP, PC2, SMCC and TRAP.

It localises to the nucleus. Its function is as follows. Component of the Mediator complex, a coactivator involved in the regulated transcription of nearly all RNA polymerase II-dependent genes. Mediator functions as a bridge to convey information from gene-specific regulatory proteins to the basal RNA polymerase II transcription machinery. Mediator is recruited to promoters by direct interactions with regulatory proteins and serves as a scaffold for the assembly of a functional preinitiation complex with RNA polymerase II and the general transcription factors. This Mus musculus (Mouse) protein is Mediator of RNA polymerase II transcription subunit 22 (Med22).